The chain runs to 189 residues: Insecticyanin-A (189 aa).

2 disulfide bridges follow: C9/C119 and C43/C175.

Belongs to the calycin superfamily. Lipocalin family. As to quaternary structure, homotetramer. As to expression, synthesized only in the caterpillars, apparently by the epidermis and secreted into the hemolymph. The protein is passed over from the larval hemolymph to that of pupae and adults and is sequestered in the eggs.

The protein localises to the secreted. In terms of biological role, this protein binds a chromophore: biliverdin IX, isomer gamma. Mixed with lipoprotein-bound carotenes, this blue protein provides hornworms with their green cryptic coloration which serves a camouflage. The sequence is that of Insecticyanin-A (INSA) from Manduca sexta (Tobacco hawkmoth).